A 140-amino-acid chain; its full sequence is L-fucose mutarotase (140 aa).

The Proton donor role is filled by His-22. Substrate is bound by residues Asp-30, Arg-107, and 129–131; that span reads YGN.

Belongs to the RbsD / FucU family. FucU mutarotase subfamily. In terms of assembly, homodecamer.

It localises to the cytoplasm. The catalysed reaction is alpha-L-fucose = beta-L-fucose. It participates in carbohydrate metabolism; L-fucose metabolism. In terms of biological role, involved in the anomeric conversion of L-fucose. The polypeptide is L-fucose mutarotase (Klebsiella pneumoniae (strain 342)).